Reading from the N-terminus, the 445-residue chain is N-succinylarginine dihydrolase (445 aa).

Substrate is bound by residues 19-28 (AGLSFGNVAS), N110, and 137-138 (HR). E174 is an active-site residue. R214 is a substrate binding site. H250 is an active-site residue. Substrate is bound by residues D252 and N363. The Nucleophile role is filled by C369.

It belongs to the succinylarginine dihydrolase family. As to quaternary structure, homodimer.

The catalysed reaction is N(2)-succinyl-L-arginine + 2 H2O + 2 H(+) = N(2)-succinyl-L-ornithine + 2 NH4(+) + CO2. It participates in amino-acid degradation; L-arginine degradation via AST pathway; L-glutamate and succinate from L-arginine: step 2/5. Its function is as follows. Catalyzes the hydrolysis of N(2)-succinylarginine into N(2)-succinylornithine, ammonia and CO(2). This Shewanella pealeana (strain ATCC 700345 / ANG-SQ1) protein is N-succinylarginine dihydrolase.